We begin with the raw amino-acid sequence, 505 residues long: ATP synthase subunit alpha, chloroplastic (505 aa).

An ATP-binding site is contributed by 170 to 177; the sequence is GDRQTGKT.

It belongs to the ATPase alpha/beta chains family. In terms of assembly, F-type ATPases have 2 components, CF(1) - the catalytic core - and CF(0) - the membrane proton channel. CF(1) has five subunits: alpha(3), beta(3), gamma(1), delta(1), epsilon(1). CF(0) has four main subunits: a, b, b' and c.

The protein localises to the plastid. The protein resides in the chloroplast thylakoid membrane. It catalyses the reaction ATP + H2O + 4 H(+)(in) = ADP + phosphate + 5 H(+)(out). Its function is as follows. Produces ATP from ADP in the presence of a proton gradient across the membrane. The alpha chain is a regulatory subunit. In Mesostigma viride (Green alga), this protein is ATP synthase subunit alpha, chloroplastic.